The sequence spans 172 residues: uncharacterized protein (172 aa).

This is an uncharacterized protein from Bacillus subtilis (strain 168).